A 204-amino-acid chain; its full sequence is 8-oxoguanine DNA glycosylase/AP lyase (204 aa).

Active-site residues include Lys-129 and Asp-147.

Belongs to the type-2 OGG1 family.

It carries out the reaction 2'-deoxyribonucleotide-(2'-deoxyribose 5'-phosphate)-2'-deoxyribonucleotide-DNA = a 3'-end 2'-deoxyribonucleotide-(2,3-dehydro-2,3-deoxyribose 5'-phosphate)-DNA + a 5'-end 5'-phospho-2'-deoxyribonucleoside-DNA + H(+). Its function is as follows. Catalyzes the excision of an oxidatively damaged form of guanine (7,8-dihydro-8-oxoguanine = 8-oxoG) from DNA. Also cleaves the DNA backbone at apurinic/apyrimidinic sites (AP sites). The polypeptide is 8-oxoguanine DNA glycosylase/AP lyase (Thermoplasma acidophilum (strain ATCC 25905 / DSM 1728 / JCM 9062 / NBRC 15155 / AMRC-C165)).